We begin with the raw amino-acid sequence, 329 residues long: Glycerol-3-phosphate dehydrogenase [NAD(P)+] (329 aa).

NADPH contacts are provided by Ser10, Trp11, Arg31, and Lys105. Lys105, Gly134, and Ser136 together coordinate sn-glycerol 3-phosphate. Residue Ala138 coordinates NADPH. Sn-glycerol 3-phosphate is bound by residues Lys189, Asp242, Ser252, Arg253, and Asn254. Residue Lys189 is the Proton acceptor of the active site. Arg253 provides a ligand contact to NADPH. NADPH is bound by residues Val277 and Glu279.

This sequence belongs to the NAD-dependent glycerol-3-phosphate dehydrogenase family.

It is found in the cytoplasm. The catalysed reaction is sn-glycerol 3-phosphate + NAD(+) = dihydroxyacetone phosphate + NADH + H(+). It carries out the reaction sn-glycerol 3-phosphate + NADP(+) = dihydroxyacetone phosphate + NADPH + H(+). Its pathway is membrane lipid metabolism; glycerophospholipid metabolism. Catalyzes the reduction of the glycolytic intermediate dihydroxyacetone phosphate (DHAP) to sn-glycerol 3-phosphate (G3P), the key precursor for phospholipid synthesis. In Neisseria meningitidis serogroup A / serotype 4A (strain DSM 15465 / Z2491), this protein is Glycerol-3-phosphate dehydrogenase [NAD(P)+].